We begin with the raw amino-acid sequence, 124 residues long: Ribonuclease pancreatic (124 aa).

A disordered region spans residues 1 to 24; it reads KETAAAKFQRQHMDSSTSSASSSN. The substrate site is built by K7 and R10. Catalysis depends on H12, which acts as the Proton acceptor. 4 disulfide bridges follow: C26–C84, C40–C95, C58–C110, and C65–C72. N34 carries N-linked (GlcNAc...) asparagine; in river-breed only glycosylation. Substrate contacts are provided by residues 41 to 45, K66, and R85; that span reads KPVNT. The active-site Proton donor is the H119.

Belongs to the pancreatic ribonuclease family. Monomer. Interacts with and forms tight 1:1 complexes with RNH1. Dimerization of two such complexes may occur. Interaction with RNH1 inhibits this protein. Swamp breed ribonuclease do not bind carbohydrate, but there is evidence of a polymorphic form that does. In terms of tissue distribution, pancreas.

It localises to the secreted. It catalyses the reaction an [RNA] containing cytidine + H2O = an [RNA]-3'-cytidine-3'-phosphate + a 5'-hydroxy-ribonucleotide-3'-[RNA].. The catalysed reaction is an [RNA] containing uridine + H2O = an [RNA]-3'-uridine-3'-phosphate + a 5'-hydroxy-ribonucleotide-3'-[RNA].. Its function is as follows. Endonuclease that catalyzes the cleavage of RNA on the 3' side of pyrimidine nucleotides. Acts on single-stranded and double-stranded RNA. This is Ribonuclease pancreatic (RNASE1) from Bubalus bubalis (Domestic water buffalo).